The following is a 187-amino-acid chain: GTP cyclohydrolase 1 (187 aa).

Zn(2+) contacts are provided by C76, H79, and C148.

Belongs to the GTP cyclohydrolase I family. Homomer.

It carries out the reaction GTP + H2O = 7,8-dihydroneopterin 3'-triphosphate + formate + H(+). It participates in cofactor biosynthesis; 7,8-dihydroneopterin triphosphate biosynthesis; 7,8-dihydroneopterin triphosphate from GTP: step 1/1. This is GTP cyclohydrolase 1 from Streptococcus gordonii (strain Challis / ATCC 35105 / BCRC 15272 / CH1 / DL1 / V288).